The primary structure comprises 155 residues: Small ribosomal subunit protein uS7c (155 aa).

The protein belongs to the universal ribosomal protein uS7 family. In terms of assembly, part of the 30S ribosomal subunit.

It localises to the plastid. The protein resides in the chloroplast. Its function is as follows. One of the primary rRNA binding proteins, it binds directly to 16S rRNA where it nucleates assembly of the head domain of the 30S subunit. This Cryptomeria japonica (Japanese cedar) protein is Small ribosomal subunit protein uS7c (rps7).